A 277-amino-acid polypeptide reads, in one-letter code: tRNA pseudouridine synthase A (277 aa).

Asp57 acts as the Nucleophile in catalysis. Substrate is bound at residue Tyr115.

The protein belongs to the tRNA pseudouridine synthase TruA family. Homodimer.

It carries out the reaction uridine(38/39/40) in tRNA = pseudouridine(38/39/40) in tRNA. Its function is as follows. Formation of pseudouridine at positions 38, 39 and 40 in the anticodon stem and loop of transfer RNAs. This is tRNA pseudouridine synthase A from Nitratidesulfovibrio vulgaris (strain DSM 19637 / Miyazaki F) (Desulfovibrio vulgaris).